Here is a 738-residue protein sequence, read N- to C-terminus: MGRYELHYGGDRRNNAPAMRRDYNGGLIAFSRYFSFFSSRTCSPESSINNQFRLLCITCDTLTTTHNFSQLLRQCIDERSISGIKTIQAHMLKSGFPAEISGSKLVDASLKCGDIDYARQVFDGMSERHIVTWNSLIAYLIKHRRSKEAVEMYRLMITNNVLPDEYTLSSVFKAFSDLSLEKEAQRSHGLAVILGLEVSNVFVGSALVDMYVKFGKTREAKLVLDRVEEKDVVLITALIVGYSQKGEDTEAVKAFQSMLVEKVQPNEYTYASVLISCGNLKDIGNGKLIHGLMVKSGFESALASQTSLLTMYLRCSLVDDSLRVFKCIEYPNQVSWTSLISGLVQNGREEMALIEFRKMMRDSIKPNSFTLSSALRGCSNLAMFEEGRQIHGIVTKYGFDRDKYAGSGLIDLYGKCGCSDMARLVFDTLSEVDVISLNTMIYSYAQNGFGREALDLFERMINLGLQPNDVTVLSVLLACNNSRLVEEGCELFDSFRKDKIMLTNDHYACMVDLLGRAGRLEEAEMLTTEVINPDLVLWRTLLSACKVHRKVEMAERITRKILEIEPGDEGTLILMSNLYASTGKWNRVIEMKSKMKDMKLKKNPAMSWVEINKETHTFMAGDLFSHPNSEQILENLEELIKKSKDLGYVEDKSCVFQDMEETAKERSLHQHSEKLAIAFAVWRNVGGSIRILKNLRVCVDCHSWIKIVSRVMKREIICRDSKRFHHFRDGSCSCGDYW.

PPR repeat units lie at residues 98-128 (AEIS…MSER), 129-163 (HIVT…NVLP), 164-198 (DEYT…GLEV), 200-230 (NVFV…VEEK), 231-265 (DVVL…KVQP), 266-300 (NEYT…GFES), 301-331 (ALAS…IEYP), 332-366 (NQVS…SIKP), 367-401 (NSFT…GFDR), 402-432 (DKYA…LSEV), 433-467 (DVIS…GLQP), 468-502 (NDVT…KIML), and 503-537 (TNDH…DLVL). The type E motif stretch occupies residues 537 to 612 (LWRTLLSACK…NPAMSWVEIN (76 aa)). The type E(+) motif stretch occupies residues 613–644 (KETHTFMAGDLFSHPNSEQILENLEELIKKSK). A type DYW motif region spans residues 645-738 (DLGYVEDKSC…DGSCSCGDYW (94 aa)).

The protein belongs to the PPR family. PCMP-H subfamily.

This Arabidopsis thaliana (Mouse-ear cress) protein is Pentatricopeptide repeat-containing protein At5g65570 (PCMP-H47).